A 379-amino-acid chain; its full sequence is Elongation factor Ts, mitochondrial (379 aa).

Residues 1-45 (MALYRTARRPLQMMLFSRLGNPEQNYSSWARKDASQSAFGMFVRL) constitute a mitochondrion transit peptide.

It belongs to the EF-Ts family.

It localises to the mitochondrion. In terms of biological role, associates with the EF-Tu.GDP complex and induces the exchange of GDP to GTP. It remains bound to the aminoacyl-tRNA.EF-Tu.GTP complex up to the GTP hydrolysis stage on the ribosome. The chain is Elongation factor Ts, mitochondrial from Ricinus communis (Castor bean).